The chain runs to 354 residues: MAGNSIGQFFRVTTFGESHGSALGGIIDGVPPSLPLTEKDLQYDLDRRRPGSSRYTSQRSELDTVEILSGVFNGKTTGTSIGLLIKNTDHRPQDYEKIKNLYRPGHADYTYEKKYGFRDYRGGGRSSARETAVRVAAGAVAKKYLFNKKNIKIRGFLAQMGDVHCNLKDWRQVNNNPFFCPDLEKLTALDTLINNLQKSGDSIGAKITVIAENIPIGLGEPVFDRLDADLAHALMSINAVKGVEIGDGFSVITKRGSEHRDEMTLDGFNSNNSGGILGGISNGQPIIMHIAIKPTSSITVPGKTITRENEETQVVTIGRHDPCIGIRVVPIAEAMVAIVVIDHLLRQRAQCEKI.

NADP(+)-binding residues include Arg-48 and Arg-54. Residues 125 to 127 (RSS), 238 to 239 (NA), Gly-278, 293 to 297 (KPTSS), and Arg-319 contribute to the FMN site.

This sequence belongs to the chorismate synthase family. In terms of assembly, homotetramer. It depends on FMNH2 as a cofactor.

The catalysed reaction is 5-O-(1-carboxyvinyl)-3-phosphoshikimate = chorismate + phosphate. It functions in the pathway metabolic intermediate biosynthesis; chorismate biosynthesis; chorismate from D-erythrose 4-phosphate and phosphoenolpyruvate: step 7/7. Functionally, catalyzes the anti-1,4-elimination of the C-3 phosphate and the C-6 proR hydrogen from 5-enolpyruvylshikimate-3-phosphate (EPSP) to yield chorismate, which is the branch point compound that serves as the starting substrate for the three terminal pathways of aromatic amino acid biosynthesis. This reaction introduces a second double bond into the aromatic ring system. This is Chorismate synthase from Blochmanniella pennsylvanica (strain BPEN).